We begin with the raw amino-acid sequence, 167 residues long: Ribosome maturation factor RimM (167 aa).

The PRC barrel domain occupies 92–165 (EDTYYIADII…RITIDPIEGM (74 aa)).

It belongs to the RimM family. In terms of assembly, binds ribosomal protein uS19.

Its subcellular location is the cytoplasm. An accessory protein needed during the final step in the assembly of 30S ribosomal subunit, possibly for assembly of the head region. Essential for efficient processing of 16S rRNA. May be needed both before and after RbfA during the maturation of 16S rRNA. It has affinity for free ribosomal 30S subunits but not for 70S ribosomes. This Alkaliphilus oremlandii (strain OhILAs) (Clostridium oremlandii (strain OhILAs)) protein is Ribosome maturation factor RimM.